Here is a 185-residue protein sequence, read N- to C-terminus: uncharacterized protein (185 aa).

A run of 2 helical transmembrane segments spans residues 1–21 and 111–131; these read MMKF…LTPE and FLWI…AFAW.

This sequence to A.aeolicus aq_1900.

It localises to the cell membrane. This is an uncharacterized protein from Aquifex aeolicus (strain VF5).